Reading from the N-terminus, the 689-residue chain is Glycine--tRNA ligase beta subunit (689 aa).

Belongs to the class-II aminoacyl-tRNA synthetase family. In terms of assembly, tetramer of two alpha and two beta subunits.

Its subcellular location is the cytoplasm. The catalysed reaction is tRNA(Gly) + glycine + ATP = glycyl-tRNA(Gly) + AMP + diphosphate. In Photorhabdus laumondii subsp. laumondii (strain DSM 15139 / CIP 105565 / TT01) (Photorhabdus luminescens subsp. laumondii), this protein is Glycine--tRNA ligase beta subunit.